The primary structure comprises 626 residues: Chaperone protein HtpG (626 aa).

An a; substrate-binding region spans residues 1–341 (METKQFKAES…SEDLSLNISR (341 aa)). A b region spans residues 342 to 552 (EILQHDRQLK…EGELSIEMEK (211 aa)). Positions 490–509 (DLGIEGEEKENTSNSDDKEN) are disordered. Basic and acidic residues predominate over residues 498-509 (KENTSNSDDKEN). Residues 553-626 (VLNAMPNNQN…FTNNICKIMK (74 aa)) are c.

Belongs to the heat shock protein 90 family. As to quaternary structure, homodimer.

It is found in the cytoplasm. Functionally, molecular chaperone. Has ATPase activity. This Clostridium botulinum (strain ATCC 19397 / Type A) protein is Chaperone protein HtpG.